The primary structure comprises 300 residues: Diphthine methyl ester synthase (300 aa).

S-adenosyl-L-methionine is bound by residues L9, D85, G88, 113–114, and L164; that span reads SV. The residue at position 172 (S172) is a Phosphoserine. S-adenosyl-L-methionine-binding residues include L222 and H247. S298 bears the Phosphoserine mark.

The protein belongs to the diphthine synthase family.

It localises to the cytoplasm. The enzyme catalyses 2-[(3S)-amino-3-carboxypropyl]-L-histidyl-[translation elongation factor 2] + 4 S-adenosyl-L-methionine = diphthine methyl ester-[translation elongation factor 2] + 4 S-adenosyl-L-homocysteine + 3 H(+). The protein operates within protein modification; peptidyl-diphthamide biosynthesis. Functionally, S-adenosyl-L-methionine-dependent methyltransferase that catalyzes four methylations of the modified target histidine residue in translation elongation factor 2 (EF-2), to form an intermediate called diphthine methyl ester. The four successive methylation reactions represent the second step of diphthamide biosynthesis. This chain is Diphthine methyl ester synthase (DPH5), found in Saccharomyces cerevisiae (strain ATCC 204508 / S288c) (Baker's yeast).